The chain runs to 58 residues: UPF0391 membrane protein Sfri_4000 (58 aa).

Transmembrane regions (helical) follow at residues 6-26 (LMFL…IAGA) and 27-47 (AAGI…ISLV).

It belongs to the UPF0391 family.

The protein resides in the cell membrane. In Shewanella frigidimarina (strain NCIMB 400), this protein is UPF0391 membrane protein Sfri_4000.